The sequence spans 274 residues: Protein FRG1 homolog (274 aa).

Residues 20–36 carry the Nuclear localization signal motif; sequence KKNLFKVGKEKKKKNKD. Positions 27 to 46 are disordered; sequence GKEKKKKNKDDKEKIDPDTV. The segment covering 34–43 has biased composition (basic and acidic residues); that stretch reads NKDDKEKIDP. Residues 252–268 carry the Bipartite nuclear localization signal motif; sequence QADGSAHELLLDRRMKM.

Belongs to the FRG1 family.

It is found in the nucleus. The protein resides in the cajal body. Its subcellular location is the nucleolus. It localises to the cytoplasm. Binds to mRNA in a sequence-independent manner. May play a role in regulation of pre-mRNA splicing or in the assembly of rRNA into ribosomal subunits. May be involved in mRNA transport. May be involved in epigenetic regulation of muscle differentiation through regulation of activity of the histone-lysine N-methyltransferase KMT5B. This Caenorhabditis elegans protein is Protein FRG1 homolog (frg-1).